A 1673-amino-acid chain; its full sequence is Glutamine and serine-rich protein 1 (1673 aa).

Disordered regions lie at residues 265–322 (VIPS…SSQA), 411–543 (DQTR…KSYV), 872–892 (RHMSPNFTPPKPQNMNNLSIN), 923–961 (QDLPSGMVSPVPGANQDDHEKNSENIKNPPNVNQEPKEG), 1050–1081 (DENANLKQIKRNMPLKRSVSKGPDVPGAQYSS), 1149–1182 (VIRPPCPGPLSPQSVAGAPVSDSGSASPPKKAEE), 1216–1272 (LSAL…EQLA), and 1390–1476 (KSKV…PPPI). Over residues 289-309 (SSKTPKSQSVVSPELTQSYTK) the composition is skewed to polar residues. Low complexity-rich tracts occupy residues 310-322 (SSQNQSSVNSSQA) and 411-458 (DQTR…PSDS). The span at 459–539 (YTSGQNQTLA…MQNSRTTADS (81 aa)) shows a compositional bias: polar residues. The segment covering 947-956 (NIKNPPNVNQ) has biased composition (polar residues). A compositionally biased stretch (basic and acidic residues) spans 1222 to 1233 (NSEKRLKTEGDK). Polar residues-rich tracts occupy residues 1259 to 1272 (KPSQPEATQPEQLA) and 1397 to 1411 (ARTTHTKASGGSKVS). The span at 1435 to 1451 (TKAEPPPKKRKQWKEEF) shows a compositional bias: basic and acidic residues. The span at 1452–1462 (SSSQSDSSPDM) shows a compositional bias: low complexity.

The protein localises to the chromosome. In terms of biological role, plays an essential role in the protection and maintenance of transcriptional and developmental programs. Protects many bivalent promoters and poised enhancers from hypermethylation, showing a marked preference for these regulatory elements over other types of promoters or enhancers. Mechanistically, cooperates with tet1 and binds to DNA in a common complex to inhibit the binding of dnmt3a/3b and therefore de novo methylation. The chain is Glutamine and serine-rich protein 1 (qser1) from Xenopus laevis (African clawed frog).